The sequence spans 305 residues: Methionyl-tRNA formyltransferase (305 aa).

Position 110–113 (110–113) interacts with (6S)-5,6,7,8-tetrahydrofolate; that stretch reads SLLP.

It belongs to the Fmt family.

It catalyses the reaction L-methionyl-tRNA(fMet) + (6R)-10-formyltetrahydrofolate = N-formyl-L-methionyl-tRNA(fMet) + (6S)-5,6,7,8-tetrahydrofolate + H(+). Its function is as follows. Attaches a formyl group to the free amino group of methionyl-tRNA(fMet). The formyl group appears to play a dual role in the initiator identity of N-formylmethionyl-tRNA by promoting its recognition by IF2 and preventing the misappropriation of this tRNA by the elongation apparatus. This is Methionyl-tRNA formyltransferase from Ureaplasma urealyticum serovar 10 (strain ATCC 33699 / Western).